The chain runs to 170 residues: APRG1 tumor suppressor candidate (170 aa).

The chain crosses the membrane as a helical span at residues 150–170; the sequence is IALALAGPGAILILELSWFLG.

In terms of tissue distribution, expressed at high levels in the pancreas and placenta. As to expression, expressed at high levels in the kidney.

It localises to the membrane. The sequence is that of APRG1 tumor suppressor candidate from Homo sapiens (Human).